A 145-amino-acid chain; its full sequence is Large ribosomal subunit protein uL15 (145 aa).

Positions 1–58 (MKLHELSPSEGSRKKRKRVGRGPGSGMGGTSTRGNKGHNQRSGGGTRPGFEGGQMPLH) are disordered. Gly residues-rich tracts occupy residues 21-31 (RGPGSGMGGTS) and 42-52 (SGGGTRPGFEG).

The protein belongs to the universal ribosomal protein uL15 family. In terms of assembly, part of the 50S ribosomal subunit.

In terms of biological role, binds to the 23S rRNA. The polypeptide is Large ribosomal subunit protein uL15 (Desulforapulum autotrophicum (strain ATCC 43914 / DSM 3382 / VKM B-1955 / HRM2) (Desulfobacterium autotrophicum)).